A 1358-amino-acid chain; its full sequence is DNA mismatch repair protein Msh6 (1358 aa).

The disordered stretch occupies residues 1–87; the sequence is MSRQSTLYSF…SSAQAVPPSS (87 aa). Phosphoserine occurs at positions 14, 38, and 40. Positions 25–46 are enriched in low complexity; that stretch reads AEASRQGAAASGASASRGGDAA. N6-acetyllysine is present on K67. A compositionally biased stretch (low complexity) spans 76–87; it reads ASSSAQAVPPSS. 5 positions are modified to phosphoserine: S91, S137, S200, S219, and S227. Residues 92 to 154 form the PWWP domain; that stretch reads PGDLVWAKME…KRMLKPYTGS (63 aa). A disordered region spans residues 197-360; that stretch reads DEPSEPEEEE…VSGGGNDSSG (164 aa). Acidic residues-rich tracts occupy residues 198–209 and 219–231; these read EPSEPEEEEETE and SEED…EEEA. Residues 240-249 show a composition bias toward basic residues; sequence RSSRQVKKRR. Phosphoserine occurs at positions 252, 254, 256, and 261. Residues 263–273 show a composition bias toward basic and acidic residues; it reads VEFKPDTKQEG. Residue T269 is modified to Phosphothreonine. Residues S274, S275, S279, and S280 each carry the phosphoserine modification. Polar residues predominate over residues 329–351; sequence LSETKSTLSAFSAPQNSESQTHV. T487 is modified (phosphothreonine). K503 is modified (N6-acetyllysine). 2 positions are modified to phosphoserine: S827 and S932. Residue T1007 is modified to Phosphothreonine. An ATP-binding site is contributed by 1132–1139; that stretch reads GPNMGGKS.

Belongs to the DNA mismatch repair MutS family. In terms of assembly, component of the DNA mismatch repair (MMR) complex composed at least of MSH2, MSH3, MSH6, PMS1 and MLH1. Heterodimer consisting of MSH2-MSH6 (MutS alpha). Forms a ternary complex with MutL alpha (MLH1-PMS1). Interacts with MCM9. Part of the BRCA1-associated genome surveillance complex (BASC), which contains BRCA1, MSH2, MSH6, MLH1, ATM, BLM, PMS2 and the RAD50-MRE11-NBS1 protein complex. This association could be a dynamic process changing throughout the cell cycle and within subnuclear domains. Post-translationally, phosphorylated by PRKCZ, which may prevent MutS alpha degradation by the ubiquitin-proteasome pathway.

Its subcellular location is the nucleus. The protein localises to the chromosome. Its function is as follows. Component of the post-replicative DNA mismatch repair system (MMR). Heterodimerizes with MSH2 to form MutS alpha, which binds to DNA mismatches thereby initiating DNA repair. When bound, MutS alpha bends the DNA helix and shields approximately 20 base pairs, and recognizes single base mismatches and dinucleotide insertion-deletion loops (IDL) in the DNA. After mismatch binding, forms a ternary complex with the MutL alpha heterodimer, which is thought to be responsible for directing the downstream MMR events, including strand discrimination, excision, and resynthesis. ATP binding and hydrolysis play a pivotal role in mismatch repair functions. The ATPase activity associated with MutS alpha regulates binding similar to a molecular switch: mismatched DNA provokes ADP--&gt;ATP exchange, resulting in a discernible conformational transition that converts MutS alpha into a sliding clamp capable of hydrolysis-independent diffusion along the DNA backbone. This transition is crucial for mismatch repair. MutS alpha may also play a role in DNA homologous recombination repair. Recruited on chromatin in G1 and early S phase via its PWWP domain that specifically binds trimethylated 'Lys-36' of histone H3 (H3K36me3): early recruitment to chromatin to be replicated allowing a quick identification of mismatch repair to initiate the DNA mismatch repair reaction. This is DNA mismatch repair protein Msh6 from Mus musculus (Mouse).